The primary structure comprises 103 residues: MAAISINVSTVKPLGDRVFVKVSPAEEKTAGGILLPDNAKEKPQIGEVVQVGPGKRNDDGTYSPVEVKVGDKVLYSKYAGTDIKLGGDDYVLLTEKDILASVA.

Belongs to the GroES chaperonin family. Heptamer of 7 subunits arranged in a ring. Interacts with the chaperonin GroEL.

The protein localises to the cytoplasm. In terms of biological role, together with the chaperonin GroEL, plays an essential role in assisting protein folding. The GroEL-GroES system forms a nano-cage that allows encapsulation of the non-native substrate proteins and provides a physical environment optimized to promote and accelerate protein folding. GroES binds to the apical surface of the GroEL ring, thereby capping the opening of the GroEL channel. The chain is Co-chaperonin GroES from Synechocystis sp. (strain ATCC 27184 / PCC 6803 / Kazusa).